The primary structure comprises 298 residues: Probable deoxyhypusine synthase 2 (298 aa).

The Nucleophile role is filled by K259.

Belongs to the deoxyhypusine synthase family. It depends on NAD(+) as a cofactor.

It catalyses the reaction [eIF5A protein]-L-lysine + spermidine = [eIF5A protein]-deoxyhypusine + propane-1,3-diamine. Its pathway is protein modification; eIF5A hypusination. Functionally, catalyzes the NAD-dependent oxidative cleavage of spermidine and the subsequent transfer of the butylamine moiety of spermidine to the epsilon-amino group of a specific lysine residue of the eIF-5A precursor protein to form the intermediate deoxyhypusine residue. The chain is Probable deoxyhypusine synthase 2 (dys2) from Archaeoglobus fulgidus (strain ATCC 49558 / DSM 4304 / JCM 9628 / NBRC 100126 / VC-16).